A 118-amino-acid polypeptide reads, in one-letter code: Basic phospholipase A2 PA-13 (118 aa).

7 cysteine pairs are disulfide-bonded: Cys-11/Cys-71, Cys-27/Cys-117, Cys-29/Cys-45, Cys-44/Cys-98, Cys-51/Cys-91, Cys-60/Cys-84, and Cys-78/Cys-89. The Ca(2+) site is built by Tyr-28, Gly-30, and Gly-32. Residue His-48 is part of the active site. Position 49 (Asp-49) interacts with Ca(2+). Asp-92 is an active-site residue.

Belongs to the phospholipase A2 family. Group I subfamily. D49 sub-subfamily. It depends on Ca(2+) as a cofactor. Expressed by the venom gland.

Its subcellular location is the secreted. It carries out the reaction a 1,2-diacyl-sn-glycero-3-phosphocholine + H2O = a 1-acyl-sn-glycero-3-phosphocholine + a fatty acid + H(+). PLA2 catalyzes the calcium-dependent hydrolysis of the 2-acyl groups in 3-sn-phosphoglycerides. This chain is Basic phospholipase A2 PA-13, found in Pseudechis australis (Mulga snake).